Reading from the N-terminus, the 328-residue chain is UDP-N-acetylglucosamine transporter YEA4 (328 aa).

A run of 10 helical transmembrane segments spans residues 1–21 (MSFVLILSLVFGGCCSNVISF), 30–50 (INLGNIVTFTQFVSVTLIQLP), 66–86 (HIPLKIHMLAVFLFFTSSVAN), 98–118 (IHIIIRCSGTTLTMIIGWAVC), 122–142 (YSKLQVQSAIIMTLGAIVASL), 166–186 (SMFGIFVVLVATALMSLLSLL), 198–218 (WKETLFYSHFLALPLFMLGYT), 241–261 (LPIATKLFMLIANNVTQFICI), 274–294 (LTLSVVLLVRKFVSLLLSVYI), and 298–318 (VLSVTAYLGTITVFLGAGLYS).

It belongs to the nucleotide-sugar transporter family. SLC35A subfamily.

Its subcellular location is the golgi apparatus membrane. Functionally, sugar transporter that specifically mediates the transport of UDP-N-acetylglucosamine (UDP-GlcNAc) from the cytosol into Golgi vesicles where glycosyltransferases function. This chain is UDP-N-acetylglucosamine transporter YEA4 (YEA4), found in Kluyveromyces lactis (strain ATCC 8585 / CBS 2359 / DSM 70799 / NBRC 1267 / NRRL Y-1140 / WM37) (Yeast).